Consider the following 147-residue polypeptide: Organic hydroperoxide resistance transcriptional regulator (147 aa).

The HTH marR-type domain occupies 11–141 (ENQLCFLLYA…LKSALYTLLE (131 aa)). Cysteine 15 is subject to Cysteine sulfenic acid (-SOH); alternate. Position 15 is an S-bacillithiol cysteine disulfide; alternate (cysteine 15). Cysteine 15 is subject to S-cysteinyl cysteine; alternate. Positions 15 to 16 (CF) form a cross-link, n,N-(cysteine-1,S-diyl)phenylalanine (Cys-Phe); alternate. A DNA-binding region (H-T-H motif) is located at residues 57–80 (VKKMGEQLYLDSGTLTPMLKRMEQ).

As to quaternary structure, homodimer. Cys-15 is oxidized by organic peroxides to cysteine sulfenic acid (Cys-SOH). This can react with the alpha-amido of the following residue to form the sulfenamide cross-link. Oxidation or cross-linking results in the loss of DNA-binding activity and the inactivation of repressor function. Both the cysteine sulfenic acid and the sulfenamide cross-link can react with free cysteine or bacillithiol (BSH) to form mixed disulfides. Further reduction of OhrR by free sulfhydryl compounds restores repressor activity.

The protein resides in the cytoplasm. Inactivated by oxidation of Cys-15 to a sulfenic acid. Organic peroxide sensor. Represses the expression of the peroxide-inducible gene ohrA by cooperative binding to two inverted repeat elements. In Bacillus subtilis (strain 168), this protein is Organic hydroperoxide resistance transcriptional regulator (ohrR).